We begin with the raw amino-acid sequence, 292 residues long: Small ribosomal subunit protein uS2 (292 aa).

The tract at residues Thr265–Trp292 is disordered. Residues Ala277–Trp292 are compositionally biased toward low complexity.

It belongs to the universal ribosomal protein uS2 family. In terms of assembly, component of the small ribosomal subunit. Mature ribosomes consist of a small (40S) and a large (60S) subunit. The 40S subunit contains about 33 different proteins and 1 molecule of RNA (18S). The 60S subunit contains about 49 different proteins and 3 molecules of RNA (25S, 5.8S and 5S). Interacts with RPS21.

Its subcellular location is the cytoplasm. Its function is as follows. Required for the assembly and/or stability of the 40S ribosomal subunit. Required for the processing of the 20S rRNA-precursor to mature 18S rRNA in a late step of the maturation of 40S ribosomal subunits. The chain is Small ribosomal subunit protein uS2 from Cryptococcus neoformans var. neoformans serotype D (strain B-3501A) (Filobasidiella neoformans).